The primary structure comprises 327 residues: Phenylalanine--tRNA ligase alpha subunit (327 aa).

Glu252 provides a ligand contact to Mg(2+).

This sequence belongs to the class-II aminoacyl-tRNA synthetase family. Phe-tRNA synthetase alpha subunit type 1 subfamily. Tetramer of two alpha and two beta subunits. Mg(2+) is required as a cofactor.

The protein localises to the cytoplasm. It catalyses the reaction tRNA(Phe) + L-phenylalanine + ATP = L-phenylalanyl-tRNA(Phe) + AMP + diphosphate + H(+). This is Phenylalanine--tRNA ligase alpha subunit from Vibrio cholerae serotype O1 (strain ATCC 39541 / Classical Ogawa 395 / O395).